We begin with the raw amino-acid sequence, 624 residues long: Glutaminase 2 (624 aa).

The segment at 1-20 (MDTQPIRLPSVAGATRSAGY) is disordered. Residues 43–325 (GELADYIPEL…LSARFDLHML (283 aa)) are glutaminase. Positions 85, 134, 178, 185, 209, 261, and 279 each coordinate substrate. An STAS domain is found at 355-466 (QQILDERHSD…ALLDDAIEWA (112 aa)). 491 to 608 (LLAELDTDEI…IMRNLAAILA (118 aa)) serves as a coordination point for a nucleoside 3',5'-cyclic phosphate.

It belongs to the glutaminase family. As to quaternary structure, homotetramer.

The enzyme catalyses L-glutamine + H2O = L-glutamate + NH4(+). The sequence is that of Glutaminase 2 (glsA2) from Bradyrhizobium diazoefficiens (strain JCM 10833 / BCRC 13528 / IAM 13628 / NBRC 14792 / USDA 110).